The following is a 172-amino-acid chain: B-box zinc finger protein 18 (172 aa).

Residues Cys5, Cys8, Cys28, His33, Cys56, Cys59, Cys79, and His84 each coordinate Zn(2+). The B box-type 1; atypical zinc finger occupies 5–47 (CDACESAAAIVFCAADEAALCCSCDEKVHKCNKLASRHLRVGL). Residues 56 to 96 (CDICENAPAFFYCEIDGSSLCLQCDMVVHVGGKRTHRRFLL) form a B box-type 2; atypical zinc finger. Residues 119–172 (QKASSGRGQESNGNGDHDHNMIDLNSNPQRVHEPGSHNQEEGIDVNNANNHEHE) are disordered. The span at 120–132 (KASSGRGQESNGN) shows a compositional bias: polar residues. Basic and acidic residues predominate over residues 148-158 (RVHEPGSHNQE).

As to expression, expressed in vasculature of leaves and petioles.

The protein localises to the nucleus. Acts as a negative regulator of seedling photomorphogenesis. Acts as a negative regulator of blue light-mediated inhibition of hypocotyl elongation through increase of bioactive gibberellin levels. Acts as a repressor of thermotolerance by modulating expression of a set of heat shock-responsive genes. The polypeptide is B-box zinc finger protein 18 (Arabidopsis thaliana (Mouse-ear cress)).